The primary structure comprises 319 residues: Probable cytochrome c oxidase subunit 2 (319 aa).

The first 33 residues, 1–33 (MSPNGSDRSPRRPMRRKLLQALTAGLVLATATG), serve as a signal peptide directing secretion. Transmembrane regions (helical) follow at residues 63 to 83 (WAAA…SVFF) and 101 to 121 (LPIE…LFYF). Residues histidine 227, cysteine 262, cysteine 266, and histidine 270 each contribute to the Cu cation site.

The protein belongs to the cytochrome c oxidase subunit 2 family. The cofactor is Cu cation. It depends on heme as a cofactor.

It localises to the cell membrane. It catalyses the reaction 4 Fe(II)-[cytochrome c] + O2 + 8 H(+)(in) = 4 Fe(III)-[cytochrome c] + 2 H2O + 4 H(+)(out). Functionally, subunits I and II form the functional core of the enzyme complex. Electrons originating in cytochrome c are transferred via heme a and Cu(A) to the binuclear center formed by heme a3 and Cu(B). The chain is Probable cytochrome c oxidase subunit 2 (ctaC) from Streptomyces coelicolor (strain ATCC BAA-471 / A3(2) / M145).